The following is a 261-amino-acid chain: Ribonuclease PH (261 aa).

Residues arginine 88 and 126 to 128 (GTR) contribute to the phosphate site. The segment at 242-261 (PYPGVLPEPKNPEPKKKFGA) is disordered. Residues 251–261 (KNPEPKKKFGA) show a composition bias toward basic and acidic residues.

Belongs to the RNase PH family. Homohexameric ring arranged as a trimer of dimers.

It carries out the reaction tRNA(n+1) + phosphate = tRNA(n) + a ribonucleoside 5'-diphosphate. In terms of biological role, phosphorolytic 3'-5' exoribonuclease that plays an important role in tRNA 3'-end maturation. Removes nucleotide residues following the 3'-CCA terminus of tRNAs; can also add nucleotides to the ends of RNA molecules by using nucleoside diphosphates as substrates, but this may not be physiologically important. Probably plays a role in initiation of 16S rRNA degradation (leading to ribosome degradation) during starvation. The polypeptide is Ribonuclease PH (Rhodococcus erythropolis (strain PR4 / NBRC 100887)).